An 85-amino-acid chain; its full sequence is Small ribosomal subunit protein uS17 (85 aa).

Belongs to the universal ribosomal protein uS17 family. As to quaternary structure, part of the 30S ribosomal subunit.

Its function is as follows. One of the primary rRNA binding proteins, it binds specifically to the 5'-end of 16S ribosomal RNA. This chain is Small ribosomal subunit protein uS17, found in Desulforapulum autotrophicum (strain ATCC 43914 / DSM 3382 / VKM B-1955 / HRM2) (Desulfobacterium autotrophicum).